The primary structure comprises 120 residues: MFAIVRTGGKQYRVAAGDKIVVEKLPGEAGSTVSLGDVLLAGEGAELKDVKGLTVSAEIIAQAKGEKVIVFKKRRRHNYRRRNGHRQQHTILKILSIGGEAKAKKAPAKAKADAPAAAEA.

The protein belongs to the bacterial ribosomal protein bL21 family. Part of the 50S ribosomal subunit. Contacts protein L20.

This protein binds to 23S rRNA in the presence of protein L20. This Rhizorhabdus wittichii (strain DSM 6014 / CCUG 31198 / JCM 15750 / NBRC 105917 / EY 4224 / RW1) (Sphingomonas wittichii) protein is Large ribosomal subunit protein bL21.